A 585-amino-acid chain; its full sequence is DNA mismatch repair protein MutL (585 aa).

It belongs to the DNA mismatch repair MutL/HexB family.

In terms of biological role, this protein is involved in the repair of mismatches in DNA. It is required for dam-dependent methyl-directed DNA mismatch repair. May act as a 'molecular matchmaker', a protein that promotes the formation of a stable complex between two or more DNA-binding proteins in an ATP-dependent manner without itself being part of a final effector complex. This is DNA mismatch repair protein MutL from Methanoculleus marisnigri (strain ATCC 35101 / DSM 1498 / JR1).